The sequence spans 198 residues: Holliday junction resolvase RecU (198 aa).

The disordered stretch occupies residues 1–21 (MVNYPHKLSSQKRQPSLSQPK). Residues 11-21 (QKRQPSLSQPK) show a composition bias toward polar residues. Residues Thr81, Asp83, Glu96, and Gln115 each contribute to the Mg(2+) site.

Belongs to the RecU family. Mg(2+) is required as a cofactor.

The protein localises to the cytoplasm. The enzyme catalyses Endonucleolytic cleavage at a junction such as a reciprocal single-stranded crossover between two homologous DNA duplexes (Holliday junction).. Its function is as follows. Endonuclease that resolves Holliday junction intermediates in genetic recombination. Cleaves mobile four-strand junctions by introducing symmetrical nicks in paired strands. Promotes annealing of linear ssDNA with homologous dsDNA. Required for DNA repair, homologous recombination and chromosome segregation. The polypeptide is Holliday junction resolvase RecU (Streptococcus pneumoniae (strain ATCC 700669 / Spain 23F-1)).